We begin with the raw amino-acid sequence, 309 residues long: Olfactory receptor 10V1 (309 aa).

The Extracellular segment spans residues 1–25 (MEGINKTAKMQFFFRPFSPDPEVQM). Residue Asn5 is glycosylated (N-linked (GlcNAc...) asparagine). The chain crosses the membrane as a helical span at residues 26-46 (LIFVVFLMMYLTSLGGNATIA). The Cytoplasmic portion of the chain corresponds to 47-54 (VIVQINHS). Residues 55–75 (LHTPMYFFLANLAVLEIFYTS) form a helical membrane-spanning segment. Over 76-100 (SITPLALANLLSMGKTPVSITGCGT) the chain is Extracellular. Residues Cys98 and Cys190 are joined by a disulfide bond. The helical transmembrane segment at 101-121 (QMFFFVFLGGADCVLLVVMAY) threads the bilayer. Topologically, residues 122 to 140 (DQFIAICHPLRYRLIMSWS) are cytoplasmic. The chain crosses the membrane as a helical span at residues 141-161 (LCVELLVGSLVLGFLLSLPLT). At 162–198 (ILIFHLPFCHNDEIYHFYCDMPAVMRLACADTRVHKT) the chain is on the extracellular side. The chain crosses the membrane as a helical span at residues 199–218 (ALYIISFIVLSIPLSLISIS). Residues 219–238 (YVFIVVAILRIRSAEGRQQA) lie on the Cytoplasmic side of the membrane. A helical transmembrane segment spans residues 239 to 259 (YSTCSSHILVVLLQYGCTSFI). Topologically, residues 260 to 272 (YLSPSSSYSPEMG) are extracellular. The helical transmembrane segment at 273–293 (RVVSVAYTFITPILNPLIYSL) threads the bilayer. Topologically, residues 294 to 309 (RNKELKDALRKALRKF) are cytoplasmic.

It belongs to the G-protein coupled receptor 1 family.

It is found in the cell membrane. In terms of biological role, odorant receptor. This is Olfactory receptor 10V1 (OR10V1) from Homo sapiens (Human).